The chain runs to 232 residues: MQDQQIINPISQSQIPQELSENVILSSVSDLYDWARLSSLWPLMYGTACCFIEIAAMIGSRFDFDRFGLVPRSSPRQADLIITAGTVTMKMAPALVRLYEQMPDPKYVIAMGACTITGGMFSSDSTTAVRGVDKLIPVDVYLPGCPPRPEAVMDAIVKLRKKIANEDVRERGNLMQTHRYYSTTHQMKVVPPIHTGVYLEAAARKSPAAALGAGVGEDMTPALVAEAEKEEA.

The [4Fe-4S] cluster site is built by cysteine 49, cysteine 50, cysteine 114, and cysteine 145.

This sequence belongs to the complex I 20 kDa subunit family. In terms of assembly, NDH-1 can be composed of about 15 different subunits; different subcomplexes with different compositions have been identified which probably have different functions. Requires [4Fe-4S] cluster as cofactor.

The protein localises to the cellular thylakoid membrane. The catalysed reaction is a plastoquinone + NADH + (n+1) H(+)(in) = a plastoquinol + NAD(+) + n H(+)(out). The enzyme catalyses a plastoquinone + NADPH + (n+1) H(+)(in) = a plastoquinol + NADP(+) + n H(+)(out). Its function is as follows. NDH-1 shuttles electrons from an unknown electron donor, via FMN and iron-sulfur (Fe-S) centers, to quinones in the respiratory and/or the photosynthetic chain. The immediate electron acceptor for the enzyme in this species is believed to be plastoquinone. Couples the redox reaction to proton translocation, and thus conserves the redox energy in a proton gradient. Cyanobacterial NDH-1 also plays a role in inorganic carbon-concentration. This Acaryochloris marina (strain MBIC 11017) protein is NAD(P)H-quinone oxidoreductase subunit K 1.